The sequence spans 309 residues: Sulfate adenylyltransferase subunit 2 (309 aa).

The protein belongs to the PAPS reductase family. CysD subfamily. Heterodimer composed of CysD, the smaller subunit, and CysN.

It carries out the reaction sulfate + ATP + H(+) = adenosine 5'-phosphosulfate + diphosphate. It functions in the pathway sulfur metabolism; hydrogen sulfide biosynthesis; sulfite from sulfate: step 1/3. With CysN forms the ATP sulfurylase (ATPS) that catalyzes the adenylation of sulfate producing adenosine 5'-phosphosulfate (APS) and diphosphate, the first enzymatic step in sulfur assimilation pathway. APS synthesis involves the formation of a high-energy phosphoric-sulfuric acid anhydride bond driven by GTP hydrolysis by CysN coupled to ATP hydrolysis by CysD. This Aeromonas salmonicida (strain A449) protein is Sulfate adenylyltransferase subunit 2.